The sequence spans 118 residues: MKVLISSLLLLLPLMLMSVVSSSSHTGVARGQRDQRQASGRWLREGGQECECQDWFLRAPRRTLMAAPRLTKPCPCDHFKGRMKKTRHQRHHRKSNKPSRACQQFLTRCLLESFALPL.

Residues 1-22 (MKVLISSLLLLLPLMLMSVVSS) form the signal peptide. 2 disulfide bridges follow: cysteine 74–cysteine 102 and cysteine 76–cysteine 109.

It belongs to the intercrine alpha (chemokine CxC) family.

The protein resides in the secreted. Its function is as follows. Chemokine that acts as a chemoattractant for monocytes, macrophages and dendritic cells. Plays a role in angiogenesis and possibly in the development of tumors. Acts as an anti-inflammatory in the stomach. May play a role in the innate defense against infections. Activates the C-X-C chemokine receptor GPR35 to induce a rapid and transient rise in the level of intracellular calcium ions. The protein is C-X-C motif chemokine 17 (CXCL17) of Bos taurus (Bovine).